The chain runs to 306 residues: Aspartate carbamoyltransferase catalytic subunit (306 aa).

Residues arginine 53 and threonine 54 each contribute to the carbamoyl phosphate site. Residue lysine 82 participates in L-aspartate binding. Carbamoyl phosphate-binding residues include arginine 103, histidine 131, and glutamine 134. Residues arginine 164 and arginine 226 each contribute to the L-aspartate site. Residues leucine 263 and proline 264 each coordinate carbamoyl phosphate.

The protein belongs to the aspartate/ornithine carbamoyltransferase superfamily. ATCase family. Heterododecamer (2C3:3R2) of six catalytic PyrB chains organized as two trimers (C3), and six regulatory PyrI chains organized as three dimers (R2).

It catalyses the reaction carbamoyl phosphate + L-aspartate = N-carbamoyl-L-aspartate + phosphate + H(+). Its pathway is pyrimidine metabolism; UMP biosynthesis via de novo pathway; (S)-dihydroorotate from bicarbonate: step 2/3. Catalyzes the condensation of carbamoyl phosphate and aspartate to form carbamoyl aspartate and inorganic phosphate, the committed step in the de novo pyrimidine nucleotide biosynthesis pathway. The protein is Aspartate carbamoyltransferase catalytic subunit of Methanocaldococcus jannaschii (strain ATCC 43067 / DSM 2661 / JAL-1 / JCM 10045 / NBRC 100440) (Methanococcus jannaschii).